The primary structure comprises 299 residues: Ribosomal protein L11 methyltransferase (299 aa).

Residues T152, G172, D194, and N234 each coordinate S-adenosyl-L-methionine.

This sequence belongs to the methyltransferase superfamily. PrmA family.

Its subcellular location is the cytoplasm. The enzyme catalyses L-lysyl-[protein] + 3 S-adenosyl-L-methionine = N(6),N(6),N(6)-trimethyl-L-lysyl-[protein] + 3 S-adenosyl-L-homocysteine + 3 H(+). Functionally, methylates ribosomal protein L11. This Geobacter metallireducens (strain ATCC 53774 / DSM 7210 / GS-15) protein is Ribosomal protein L11 methyltransferase.